The primary structure comprises 439 residues: Cobyrinate a,c-diamide synthase (439 aa).

The GATase cobBQ-type domain maps to 238–431 (KIAVAYDKAF…AHVNFLGNIE (194 aa)). The active-site Nucleophile is C320.

Belongs to the CobB/CbiA family. Mg(2+) is required as a cofactor.

The enzyme catalyses cob(II)yrinate + 2 L-glutamine + 2 ATP + 2 H2O = cob(II)yrinate a,c diamide + 2 L-glutamate + 2 ADP + 2 phosphate + 2 H(+). Its pathway is cofactor biosynthesis; adenosylcobalamin biosynthesis; cob(II)yrinate a,c-diamide from sirohydrochlorin (anaerobic route): step 10/10. Functionally, catalyzes the ATP-dependent amidation of the two carboxylate groups at positions a and c of cobyrinate, using either L-glutamine or ammonia as the nitrogen source. The chain is Cobyrinate a,c-diamide synthase from Clostridium tetani (strain Massachusetts / E88).